Consider the following 1436-residue polypeptide: MENILDPSVVNSHILENGSRRSSINPILDSELRDKTFEKAHRRSLTLLSSFTSSMLELPNNGKEENHRRPSVARSSSDRSKASAKEDLFSEAFRMAEQPPAEALTISTPVDPINIDELDRAYAVSPSDTSNLLHPPTSSSSIPIPIKNAGHSNLDHPIRPSLQSSISSNRIIKSPGIKEDDYMHRGRSISSPMIDVEHINSTAVPSKTKNLPEKPKRSHKLRNSITFAKIEDHPERKSQLRRLSSSLKCFDPEYDYNDPSLSIRRDSSTYYFSNVNETYDEEDSDLDSETSTVNWVQSVLNLPSLLSDDLMANPKNKERFEWQYMLTSVLTGDIVRSEKLRLRKIASSREGRNSDYSDNLWMEIWCWLTHRSVDSYRENLKHLRTGMVDVLLAIMNFHWDESNELTPIVAVDNMLQKLDKYERLYPSRRSILQEHSLYASESFQHKLDVLTAYSNVTHALEIQVNIIRSWVGNEEMDITKNTTNSINNVSQISNGPFVERFYRETGLIRAFEQRIMTNMNSVLSKVCNTIVTYADDLKSYGLPLIADDYMRLLSFPFRLIKEFLNLRLSCAENITSISLFTIDSLLDDLRNTMKVAVHIIQQHTVLIKPFRDDSKFVDENQSLNNILVASLKFYFNLLHRKVRNGCALLHFKETEILEGEWDFLLAVCPHIEHGFQIMSKSLSSLVGEILTNINRYLKDQLQGPDTDDSALITSFYIKVLDCVRIRFRKLMSFTRILKAHLENSCEYVIKENSLSLLIQRLEESNHVLTYTASIEHEGAYVIVPGHLVDSPNILREVLSMTFNKGDNNFESVPPYAVVLAPDSSICWNGHVTDLDIPEVSISIAPNCVRLVTLATANQLSVIEDYFISIVGDTVSLVDSAKANSSKINKQMTKIKRNSLKLALSLLDVIQTIRTRYHGMNCQNLIHYSFSYAIEFAQRLMRLSILDASSIGLIRRKMIQLAISWVGFIYEDCSPTDRNTFRWTVTALEFAMIMTYGSNILMIDKKSFEELKEKVGKCVALLLLHFDVMGTKHAGRSMDQQAGDIPARLVRNNSDRSRLSDNELASFVKEEVMHRIIELESNRRDRLYKSQLIGRVLDDTTKENRLLKELASSKSNITIRWQQGGLIGSGSFGTVYRAVNLDTGDLMAVKEVALHKPRISRPMIKRIKGEMLVLELFDHPNVVSYYGIEVHREKVNIFMELCQGSSLFEFLRYGRIEDELVIQVYVLQLLEGLAYIHSCGVSHQDVKPENILFDHNGIMKFTDFGSAKMSGSASTKIFEQLTQQEEEEFEKDSEFLQHLDQNRGYSLTGTPTYMAPELILGNPSERVGAMDIWSLGCVIVEMATGSPPWPRLDNHFSLMYHIAAHNPPIIPADDQLSPLGQNFLKRCFVSDPNQRATAAELLMDPWVYPLRAGTEFDLMNSSVVESAPSTNGAPLEL.

The segment at 56-85 (LELPNNGKEENHRRPSVARSSSDRSKASAK) is disordered. Over residues 76–85 (SSDRSKASAK) the composition is skewed to basic and acidic residues. The residue at position 224 (Ser-224) is a Phosphoserine. Phosphothreonine is present on Thr-226. The segment at 282-1123 (EDSDLDSETS…SNITIRWQQG (842 aa)) is interaction with tea4. Residues 1120–1406 (WQQGGLIGSG…AAELLMDPWV (287 aa)) form the Protein kinase domain. Residues 1126–1134 (IGSGSFGTV) and Lys-1149 contribute to the ATP site. The active-site Proton acceptor is the Asp-1244.

This sequence belongs to the protein kinase superfamily. STE Ser/Thr protein kinase family. MAP kinase kinase kinase subfamily. Interacts with tea4.

The enzyme catalyses L-seryl-[protein] + ATP = O-phospho-L-seryl-[protein] + ADP + H(+). The catalysed reaction is L-threonyl-[protein] + ATP = O-phospho-L-threonyl-[protein] + ADP + H(+). Its function is as follows. Involved in a signal transduction pathway that is activated by changes in the osmolarity of the extracellular environment. Activates the wis1 MAP kinase kinase by phosphorylation. This is MAP kinase kinase kinase win1 (win1) from Schizosaccharomyces pombe (strain 972 / ATCC 24843) (Fission yeast).